Consider the following 182-residue polypeptide: LIM domain-containing protein C (182 aa).

LIM zinc-binding domains follow at residues Ser3 to Gln63 and Thr110 to Pro170.

The protein localises to the cell projection. It is found in the pseudopodium. Its subcellular location is the cytoplasm. The protein resides in the cell cortex. It localises to the cytoskeleton. Functionally, binds to F-actin and may modulate the chemotactic response during early development and contribute to the maintenance of the strength of the actin cytoskeleton. The polypeptide is LIM domain-containing protein C (limC) (Dictyostelium discoideum (Social amoeba)).